The primary structure comprises 245 residues: 1-(5-phosphoribosyl)-5-[(5-phosphoribosylamino)methylideneamino] imidazole-4-carboxamide isomerase (245 aa).

Aspartate 7 (proton acceptor) is an active-site residue. Aspartate 129 serves as the catalytic Proton donor.

This sequence belongs to the HisA/HisF family.

It is found in the cytoplasm. The catalysed reaction is 1-(5-phospho-beta-D-ribosyl)-5-[(5-phospho-beta-D-ribosylamino)methylideneamino]imidazole-4-carboxamide = 5-[(5-phospho-1-deoxy-D-ribulos-1-ylimino)methylamino]-1-(5-phospho-beta-D-ribosyl)imidazole-4-carboxamide. It participates in amino-acid biosynthesis; L-histidine biosynthesis; L-histidine from 5-phospho-alpha-D-ribose 1-diphosphate: step 4/9. The protein is 1-(5-phosphoribosyl)-5-[(5-phosphoribosylamino)methylideneamino] imidazole-4-carboxamide isomerase of Pectobacterium atrosepticum (strain SCRI 1043 / ATCC BAA-672) (Erwinia carotovora subsp. atroseptica).